A 193-amino-acid polypeptide reads, in one-letter code: Holliday junction branch migration complex subunit RuvA (193 aa).

The domain I stretch occupies residues 1–64; that stretch reads MIGRIAGTLI…EDAHLLYGFG (64 aa). The tract at residues 65-143 is domain II; that stretch reads TAAERETFRQ…ADLGTVPGGP (79 aa). The segment at 144–151 is flexible linker; the sequence is AVSDDAVD. A domain III region spans residues 151–193; that stretch reads DVLNALLALGYSDKEAALAIKQVPAGTGVSEGIKLALKALSKG.

It belongs to the RuvA family. As to quaternary structure, homotetramer. Forms an RuvA(8)-RuvB(12)-Holliday junction (HJ) complex. HJ DNA is sandwiched between 2 RuvA tetramers; dsDNA enters through RuvA and exits via RuvB. An RuvB hexamer assembles on each DNA strand where it exits the tetramer. Each RuvB hexamer is contacted by two RuvA subunits (via domain III) on 2 adjacent RuvB subunits; this complex drives branch migration. In the full resolvosome a probable DNA-RuvA(4)-RuvB(12)-RuvC(2) complex forms which resolves the HJ.

The protein localises to the cytoplasm. Functionally, the RuvA-RuvB-RuvC complex processes Holliday junction (HJ) DNA during genetic recombination and DNA repair, while the RuvA-RuvB complex plays an important role in the rescue of blocked DNA replication forks via replication fork reversal (RFR). RuvA specifically binds to HJ cruciform DNA, conferring on it an open structure. The RuvB hexamer acts as an ATP-dependent pump, pulling dsDNA into and through the RuvAB complex. HJ branch migration allows RuvC to scan DNA until it finds its consensus sequence, where it cleaves and resolves the cruciform DNA. The polypeptide is Holliday junction branch migration complex subunit RuvA (Ralstonia pickettii (strain 12J)).